The primary structure comprises 226 residues: Phosphoheptose isomerase (226 aa).

In terms of domain architecture, SIS spans 50–212 (IAGVFETGGK…ERMMGYGTEC (163 aa)). 65–67 (NGG) lines the substrate pocket. Zn(2+) is bound by residues His74 and Glu78. Residues Glu78, 109–110 (ND), 135–137 (STS), Ser140, and Gln188 contribute to the substrate site. Positions 188 and 196 each coordinate Zn(2+).

The protein belongs to the SIS family. GmhA subfamily. Zn(2+) is required as a cofactor.

The protein resides in the cytoplasm. The enzyme catalyses 2 D-sedoheptulose 7-phosphate = D-glycero-alpha-D-manno-heptose 7-phosphate + D-glycero-beta-D-manno-heptose 7-phosphate. Its pathway is carbohydrate biosynthesis; D-glycero-D-manno-heptose 7-phosphate biosynthesis; D-glycero-alpha-D-manno-heptose 7-phosphate and D-glycero-beta-D-manno-heptose 7-phosphate from sedoheptulose 7-phosphate: step 1/1. Catalyzes the isomerization of sedoheptulose 7-phosphate in D-glycero-D-manno-heptose 7-phosphate. The polypeptide is Phosphoheptose isomerase (Chlorobium phaeobacteroides (strain DSM 266 / SMG 266 / 2430)).